The primary structure comprises 367 residues: 3-ketodihydrosphingosine reductase ksrA (367 aa).

A helical transmembrane segment spans residues 12–32 (ASPATLGISLILCGFIVYSVS). The NADPH site is built by Gly53, Ser55, Gly57, Arg78, Lys82, Asp108, and Leu109. Positions 53–57 (GGSDG) match the GXSXG motif. The helical transmembrane segment at 193-213 (LIFTCSTLAFVSIAGYAPYSP) threads the bilayer. Catalysis depends on Tyr211, which acts as the Proton acceptor. NADP(+) is bound by residues Tyr211, Lys215, and Ile259. The active-site Lowers pKa of active site Tyr is the Lys215.

The protein belongs to the short-chain dehydrogenases/reductases (SDR) family.

Its subcellular location is the endoplasmic reticulum membrane. It catalyses the reaction sphinganine + NADP(+) = 3-oxosphinganine + NADPH + H(+). The protein operates within lipid metabolism; sphingolipid metabolism. Its function is as follows. Catalyzes the reduction of 3'-oxosphinganine (3-ketodihydrosphingosine/KDS) to sphinganine (dihydrosphingosine/DHS), the second step of de novo sphingolipid biosynthesis. This Aspergillus fumigatus (strain ATCC MYA-4609 / CBS 101355 / FGSC A1100 / Af293) (Neosartorya fumigata) protein is 3-ketodihydrosphingosine reductase ksrA.